We begin with the raw amino-acid sequence, 267 residues long: Diphthine synthase (267 aa).

S-adenosyl-L-methionine-binding positions include Leu-9, Asp-87, Ile-90, 115-116 (SI), Leu-166, Leu-205, and His-230.

Belongs to the diphthine synthase family. Homodimer.

It carries out the reaction 2-[(3S)-amino-3-carboxypropyl]-L-histidyl-[translation elongation factor 2] + 3 S-adenosyl-L-methionine = diphthine-[translation elongation factor 2] + 3 S-adenosyl-L-homocysteine + 3 H(+). Its pathway is protein modification; peptidyl-diphthamide biosynthesis. In terms of biological role, S-adenosyl-L-methionine-dependent methyltransferase that catalyzes the trimethylation of the amino group of the modified target histidine residue in translation elongation factor 2 (EF-2), to form an intermediate called diphthine. The three successive methylation reactions represent the second step of diphthamide biosynthesis. In Staphylothermus marinus (strain ATCC 43588 / DSM 3639 / JCM 9404 / F1), this protein is Diphthine synthase.